Here is a 271-residue protein sequence, read N- to C-terminus: Phosphatidylglycerol--prolipoprotein diacylglyceryl transferase (271 aa).

7 helical membrane passes run 21-41, 60-80, 95-115, 124-144, 176-196, 203-223, and 230-250; these read ISVRWYGLMYLFGFLFAMWLA, LLFAGFLGVVLGGRIGYVLFY, VWTGGMSFHGGLLGVITAMLW, FFGVADFVAPLVPFGLGVGRL, SQLYEMALEGVLLFFILNWFI, GSVSGLFLAGYGTFRFLVEYV, and LGLFGGFISMGQILSSPMIIG. Residue R143 coordinates a 1,2-diacyl-sn-glycero-3-phospho-(1'-sn-glycerol).

This sequence belongs to the Lgt family.

The protein resides in the cell inner membrane. The catalysed reaction is L-cysteinyl-[prolipoprotein] + a 1,2-diacyl-sn-glycero-3-phospho-(1'-sn-glycerol) = an S-1,2-diacyl-sn-glyceryl-L-cysteinyl-[prolipoprotein] + sn-glycerol 1-phosphate + H(+). It participates in protein modification; lipoprotein biosynthesis (diacylglyceryl transfer). Catalyzes the transfer of the diacylglyceryl group from phosphatidylglycerol to the sulfhydryl group of the N-terminal cysteine of a prolipoprotein, the first step in the formation of mature lipoproteins. The protein is Phosphatidylglycerol--prolipoprotein diacylglyceryl transferase of Vibrio vulnificus (strain YJ016).